Reading from the N-terminus, the 427-residue chain is 3-phosphoshikimate 1-carboxyvinyltransferase (427 aa).

The 3-phosphoshikimate site is built by Lys22, Ser23, and Arg27. Lys22 serves as a coordination point for phosphoenolpyruvate. The phosphoenolpyruvate site is built by Gly96 and Arg124. 3-phosphoshikimate-binding residues include Ser169, Ser170, Gln171, Ser197, Asp313, Asn336, and Lys340. Phosphoenolpyruvate is bound at residue Gln171. Residue Asp313 is the Proton acceptor of the active site. Arg344, Arg386, and Lys411 together coordinate phosphoenolpyruvate.

The protein belongs to the EPSP synthase family. Monomer.

Its subcellular location is the cytoplasm. It carries out the reaction 3-phosphoshikimate + phosphoenolpyruvate = 5-O-(1-carboxyvinyl)-3-phosphoshikimate + phosphate. Its pathway is metabolic intermediate biosynthesis; chorismate biosynthesis; chorismate from D-erythrose 4-phosphate and phosphoenolpyruvate: step 6/7. Catalyzes the transfer of the enolpyruvyl moiety of phosphoenolpyruvate (PEP) to the 5-hydroxyl of shikimate-3-phosphate (S3P) to produce enolpyruvyl shikimate-3-phosphate and inorganic phosphate. This chain is 3-phosphoshikimate 1-carboxyvinyltransferase, found in Escherichia coli O1:K1 / APEC.